A 259-amino-acid polypeptide reads, in one-letter code: Phosphate import ATP-binding protein PstB 2 (259 aa).

Residues 12-254 (ISARGLNVHY…PKEPLTQGYI (243 aa)) enclose the ABC transporter domain. Position 44-51 (44-51 (GPSGCGKS)) interacts with ATP.

The protein belongs to the ABC transporter superfamily. Phosphate importer (TC 3.A.1.7) family. In terms of assembly, the complex is composed of two ATP-binding proteins (PstB), two transmembrane proteins (PstC and PstA) and a solute-binding protein (PstS).

Its subcellular location is the cell inner membrane. It carries out the reaction phosphate(out) + ATP + H2O = ADP + 2 phosphate(in) + H(+). Functionally, part of the ABC transporter complex PstSACB involved in phosphate import. Responsible for energy coupling to the transport system. The chain is Phosphate import ATP-binding protein PstB 2 from Paramagnetospirillum magneticum (strain ATCC 700264 / AMB-1) (Magnetospirillum magneticum).